The following is a 1208-amino-acid chain: Putative protease AXL1 (1208 aa).

His-68 is a Zn(2+) binding site. Catalysis depends on Glu-71, which acts as the Proton acceptor. Zn(2+)-binding residues include His-72 and Glu-156. Ser-262 bears the Phosphoserine mark.

Belongs to the peptidase M16 family. In terms of assembly, interacts with BUD5. Zn(2+) is required as a cofactor.

Its subcellular location is the bud neck. In terms of biological role, probable protease. Involved in axial budding. The protein is Putative protease AXL1 (AXL1) of Saccharomyces cerevisiae (strain ATCC 204508 / S288c) (Baker's yeast).